A 597-amino-acid chain; its full sequence is Elongation factor 4 (597 aa).

In terms of domain architecture, tr-type G spans 2–184; sequence KNIRNFSIIA…EIVAKIPAPT (183 aa). GTP is bound by residues 14-19 and 131-134; these read DHGKST and NKID.

It belongs to the TRAFAC class translation factor GTPase superfamily. Classic translation factor GTPase family. LepA subfamily.

It localises to the cell inner membrane. It carries out the reaction GTP + H2O = GDP + phosphate + H(+). In terms of biological role, required for accurate and efficient protein synthesis under certain stress conditions. May act as a fidelity factor of the translation reaction, by catalyzing a one-codon backward translocation of tRNAs on improperly translocated ribosomes. Back-translocation proceeds from a post-translocation (POST) complex to a pre-translocation (PRE) complex, thus giving elongation factor G a second chance to translocate the tRNAs correctly. Binds to ribosomes in a GTP-dependent manner. The chain is Elongation factor 4 from Neisseria meningitidis serogroup C / serotype 2a (strain ATCC 700532 / DSM 15464 / FAM18).